A 425-amino-acid polypeptide reads, in one-letter code: MSRVNTMHQWKERLRDRARTASFGRFLWRRFLDDRLFQAAASLAYTTVFALVPLAIVVFGVLSAFPAFNEWKDALTDFIFNNFVPGAARSVQNYLNRSLEDLGKFTVAGMVALVASLLITLHSIEQTFNSIWRVAAARPKVTRFLIYWTVLTLGTMLAAASMAMAAYVFALPLFRTTEGQWLAEFAWRLAPMAVEFVCIVLIYRVVPQHAVRLRHALPGALLAVILMEIVKWGFGFYLGNFQTYQRIYGALSALPILLLWIYLSWVSVLLGASLASSMSAFRYQPEAMRLPPGFEIYGLLRLLGRFRQARLHGNGLDEDRILALEPMLTDTLMQELLCELKRIRLLRRDERGNWLLARDLDVVPLAELYESCQLRVPVEDRPLPCRDDPYGQAAAAALEQLRQPLRSVLAQPVGDLYTHLPGDPP.

The next 6 helical transmembrane spans lie at Val-48–Phe-68, Phe-105–Glu-125, Gly-154–Phe-174, Leu-182–Ile-202, Ala-216–Phe-236, and Ala-250–Leu-270.

The protein belongs to the UPF0761 family.

Its subcellular location is the cell inner membrane. This Xanthomonas campestris pv. campestris (strain 8004) protein is UPF0761 membrane protein XC_3370.